Reading from the N-terminus, the 518-residue chain is Mitochondrial distribution and morphology protein 34 (518 aa).

The 198-residue stretch at 1-198 (MSFKVNWNTL…LPTLIHRLSL (198 aa)) folds into the SMP-LTD domain. Disordered regions lie at residues 335-369 (SRPK…SEMS) and 491-518 (IPDV…PYQV). Residues 336–350 (RPKRRVIKLGSKKSS) show a composition bias toward basic residues. Residues 492–506 (PDVKSHPGTGRKLDT) are compositionally biased toward basic and acidic residues.

This sequence belongs to the MDM34 family. As to quaternary structure, component of the ER-mitochondria encounter structure (ERMES) or MDM complex, composed of MMM1, MDM10, MDM12 and MDM34.

It is found in the mitochondrion outer membrane. In terms of biological role, component of the ERMES/MDM complex, which serves as a molecular tether to connect the endoplasmic reticulum (ER) and mitochondria. Components of this complex are involved in the control of mitochondrial shape and protein biogenesis, and function in nonvesicular lipid trafficking between the ER and mitochondria. MDM34 is required for the interaction of the ER-resident membrane protein MMM1 and the outer mitochondrial membrane-resident beta-barrel protein MDM10. This chain is Mitochondrial distribution and morphology protein 34, found in Meyerozyma guilliermondii (strain ATCC 6260 / CBS 566 / DSM 6381 / JCM 1539 / NBRC 10279 / NRRL Y-324) (Yeast).